We begin with the raw amino-acid sequence, 365 residues long: UDP-N-acetylglucosamine--N-acetylmuramyl-(pentapeptide) pyrophosphoryl-undecaprenol N-acetylglucosamine transferase (365 aa).

UDP-N-acetyl-alpha-D-glucosamine-binding positions include 10–12, asparagine 128, arginine 170, serine 199, isoleucine 250, and glutamine 295; that span reads TGG.

This sequence belongs to the glycosyltransferase 28 family. MurG subfamily.

It is found in the cell inner membrane. It catalyses the reaction di-trans,octa-cis-undecaprenyl diphospho-N-acetyl-alpha-D-muramoyl-L-alanyl-D-glutamyl-meso-2,6-diaminopimeloyl-D-alanyl-D-alanine + UDP-N-acetyl-alpha-D-glucosamine = di-trans,octa-cis-undecaprenyl diphospho-[N-acetyl-alpha-D-glucosaminyl-(1-&gt;4)]-N-acetyl-alpha-D-muramoyl-L-alanyl-D-glutamyl-meso-2,6-diaminopimeloyl-D-alanyl-D-alanine + UDP + H(+). It participates in cell wall biogenesis; peptidoglycan biosynthesis. Cell wall formation. Catalyzes the transfer of a GlcNAc subunit on undecaprenyl-pyrophosphoryl-MurNAc-pentapeptide (lipid intermediate I) to form undecaprenyl-pyrophosphoryl-MurNAc-(pentapeptide)GlcNAc (lipid intermediate II). This is UDP-N-acetylglucosamine--N-acetylmuramyl-(pentapeptide) pyrophosphoryl-undecaprenol N-acetylglucosamine transferase from Prosthecochloris aestuarii (strain DSM 271 / SK 413).